Consider the following 568-residue polypeptide: Potassium-transporting ATPase potassium-binding subunit (568 aa).

The next 10 helical transmembrane spans lie at 3-23, 68-88, 133-153, 180-200, 256-276, 281-301, 375-395, 421-441, 497-517, and 535-555; these read TEVLGVIAQIVLMVVLSYPLG, LLVVNLFWFLWGMVLLVTQGV, FVIMLFQFITAATGMAAMAGI, LLPLSLVVGFILIVQGTPMGF, VECWSILIIPMAMAFAFGFYL, LGYSIYGVMLFAYLVGVCINV, FGGVGVGWMNYFTFIIIAVFI, IVALLHPFIILVGTALAAYLF, IVLILGRFVPIVGQVAIAGIL, and VTFGVMTFAVIFIVAALSFFP.

The protein belongs to the KdpA family. In terms of assembly, the system is composed of three essential subunits: KdpA, KdpB and KdpC.

It is found in the cell inner membrane. Functionally, part of the high-affinity ATP-driven potassium transport (or Kdp) system, which catalyzes the hydrolysis of ATP coupled with the electrogenic transport of potassium into the cytoplasm. This subunit binds the periplasmic potassium ions and delivers the ions to the membrane domain of KdpB through an intramembrane tunnel. The polypeptide is Potassium-transporting ATPase potassium-binding subunit (Phocaeicola vulgatus (strain ATCC 8482 / DSM 1447 / JCM 5826 / CCUG 4940 / NBRC 14291 / NCTC 11154) (Bacteroides vulgatus)).